The sequence spans 251 residues: tRNA-cytidine(32) 2-sulfurtransferase 2 (251 aa).

The PP-loop motif motif lies at serine 33–serine 38. [4Fe-4S] cluster contacts are provided by cysteine 108, cysteine 111, and cysteine 199.

This sequence belongs to the TtcA family. Homodimer. The cofactor is Mg(2+). [4Fe-4S] cluster serves as cofactor.

The protein resides in the cytoplasm. The catalysed reaction is cytidine(32) in tRNA + S-sulfanyl-L-cysteinyl-[cysteine desulfurase] + AH2 + ATP = 2-thiocytidine(32) in tRNA + L-cysteinyl-[cysteine desulfurase] + A + AMP + diphosphate + H(+). It functions in the pathway tRNA modification. Catalyzes the ATP-dependent 2-thiolation of cytidine in position 32 of tRNA, to form 2-thiocytidine (s(2)C32). The sulfur atoms are provided by the cysteine/cysteine desulfurase (IscS) system. This is tRNA-cytidine(32) 2-sulfurtransferase 2 from Francisella tularensis subsp. tularensis (strain FSC 198).